Reading from the N-terminus, the 249-residue chain is Acetylglutamate kinase (249 aa).

Substrate contacts are provided by residues 38 to 39 (GG), R60, and N147.

It belongs to the acetylglutamate kinase family. ArgB subfamily.

The protein resides in the cytoplasm. The enzyme catalyses N-acetyl-L-glutamate + ATP = N-acetyl-L-glutamyl 5-phosphate + ADP. It functions in the pathway amino-acid biosynthesis; L-arginine biosynthesis; N(2)-acetyl-L-ornithine from L-glutamate: step 2/4. Functionally, catalyzes the ATP-dependent phosphorylation of N-acetyl-L-glutamate. The sequence is that of Acetylglutamate kinase from Deinococcus geothermalis (strain DSM 11300 / CIP 105573 / AG-3a).